We begin with the raw amino-acid sequence, 194 residues long: Superoxide dismutase [Cu-Zn] (194 aa).

The signal sequence occupies residues 1 to 20 (MTRPLALIIFLVAILTNTDP). Positions 85 and 104 each coordinate Cu cation. A disulfide bond links Cys96 and Cys188. Zn(2+)-binding residues include His104, His112, His121, and Asp124. Residue His162 coordinates Cu cation.

It belongs to the Cu-Zn superoxide dismutase family. Homodimer. Cu cation is required as a cofactor. Requires Zn(2+) as cofactor.

The enzyme catalyses 2 superoxide + 2 H(+) = H2O2 + O2. Destroys radicals which are normally produced within the cells and which are toxic to biological systems. The chain is Superoxide dismutase [Cu-Zn] from Ramazzottius varieornatus (Water bear).